Reading from the N-terminus, the 1215-residue chain is Endoplasmic reticulum transmembrane helix translocase (1215 aa).

Topologically, residues 1 to 27 (MTKKSFVSSPIVRDSTLLVPKSLIAKP) are cytoplasmic. The helical transmembrane segment at 28–43 (YVLPFFPLYATFAQLY) threads the bilayer. Topologically, residues 44-56 (FQQYDRYIKGPEW) are lumenal. Residues 57 to 76 (TFVYLGTLVSLNILVMLMPA) traverse the membrane as a helical segment. At 77 to 188 (WNVKIKAKFN…ENSFDIPIPT (112 aa)) the chain is on the cytoplasmic side. The interval 156–185 (KIGDFQKCKGHSGDLTHLKRLYGENSFDIP) is A-domain; part 1. A helical membrane pass occupies residues 189-216 (FMELFKEHAVAPLFVFQVFCVALWLLDE). F217 is a topological domain (lumenal). The helical transmembrane segment at 218–246 (WYYSLFNLFMIISMEAAAVFQRLTALKEF) threads the bilayer. Over 247–395 (RTMGIKPYTI…IYSAERVSVD (149 aa)) the chain is Cytoplasmic. Residues 250-390 (GIKPYTINVF…LVRVMIYSAE (141 aa)) form an A-domain; part 2 region. At S324 the chain carries Phosphoserine. The chain crosses the membrane as a helical span at residues 396–425 (NKEALMFILFLLIFAVIASWYVWVEGTKMG). The Lumenal portion of the chain corresponds to 426 to 427 (RI). Helical transmembrane passes span 428–442 (QSKLILDCILIITSV) and 446–464 (ELPMELTMAVNSSLAALAK). Residues 465–971 (FYVYCTEPFR…APFTSKLANV (507 aa)) lie on the Cytoplasmic side of the membrane. The segment at 466 to 495 (YVYCTEPFRIPFAGRIDVCCFDKTGTLTGE) is P-domain; part 1. The active-site 4-aspartylphosphate intermediate is D487. Residues D487 and T489 each coordinate Mg(2+). ATP-binding positions include 487-489 (DKT), F582, R634, D699, and 816-820 (DGTND). The segment at 497-674 (LVFEGLAGIS…FNGFLIFHCP (178 aa)) is N-domain. Residues 677–837 (DDAIETIKML…HVGIALLNGT (161 aa)) are P-domain; part 2. D816 contacts Mg(2+). Residues 838–953 (EEGLKKLGEQ…DAQGDEAPAL (116 aa)) form an arm-like region. Position 936 is a phosphoserine (S936). The P-domain; part 3 stretch occupies residues 954-969 (KLGDASCAAPFTSKLA). Residues 972–1011 (SAVTNIIRQGRCALVNTIQMYKILALNCLISAYSLSIIYM) form a helical membrane-spanning segment. Residues 1012–1017 (AGVKFG) are Lumenal-facing. The helical transmembrane segment at 1018–1035 (DGQATVSGLLLSVCFLSI) threads the bilayer. The Cytoplasmic portion of the chain corresponds to 1036–1055 (SRGKPLEKLSKQRPQSGIFN). The chain crosses the membrane as a helical span at residues 1056 to 1084 (VYIMGSILSQFAVHIATLVYITTEIYKLE). At 1085 to 1099 (PREPQVDLEKEFAPS) the chain is on the lumenal side. The chain crosses the membrane as a helical span at residues 1100–1121 (LLNTGIFIIQLVQQVSTFAVNY). Residues 1122–1133 (QGEPFRENIRSN) are Cytoplasmic-facing. Residues 1134-1151 (KGMYYGLLGVTGLALASA) traverse the membrane as a helical segment. Over 1152 to 1168 (TEFLPELNEAMKFVPMT) the chain is Lumenal. The chain crosses the membrane as a helical span at residues 1169–1197 (DDFKIKLTLTLLLDFFGSWGVEHFFKFFF). Residues 1198–1215 (MDDKPSDISVQQVKIASK) are Cytoplasmic-facing.

Belongs to the cation transport ATPase (P-type) (TC 3.A.3) family. Type V subfamily. Mg(2+) is required as a cofactor.

Its subcellular location is the endoplasmic reticulum membrane. It catalyses the reaction [protein]-with a C-terminal TM segment(out) + ATP + H2O = [protein]-with a C-terminal TM segment(in) + ADP + phosphate + H(+). The ATPase activity is stimulated by phosphatidylinositol 4-phosphate (PI4P). Its function is as follows. Endoplasmic reticulum translocase required to remove mitochondrial transmembrane proteins mistargeted to the endoplasmic reticulum. Acts as a dislocase that mediates the ATP-dependent extraction of mislocalized mitochondrial transmembrane proteins from the endoplasmic reticulum membrane. Specifically binds mitochondrial tail-anchored transmembrane proteins: has an atypically large substrate-binding pocket that recognizes and binds moderately hydrophobic transmembranes with short hydrophilic lumenal domains. The sequence is that of Endoplasmic reticulum transmembrane helix translocase from Saccharomyces cerevisiae (strain ATCC 204508 / S288c) (Baker's yeast).